The sequence spans 372 residues: Biotin synthase (372 aa).

A Radical SAM core domain is found at 73–308 (CCGNTVDLCS…QQIIRYAGGR (236 aa)). Cys91, Cys95, and Cys98 together coordinate [4Fe-4S] cluster. Residues Cys136, Cys173, Cys233, and Arg303 each coordinate [2Fe-2S] cluster.

Belongs to the radical SAM superfamily. Biotin synthase family. As to quaternary structure, homodimer. The cofactor is [4Fe-4S] cluster. It depends on [2Fe-2S] cluster as a cofactor.

It catalyses the reaction (4R,5S)-dethiobiotin + (sulfur carrier)-SH + 2 reduced [2Fe-2S]-[ferredoxin] + 2 S-adenosyl-L-methionine = (sulfur carrier)-H + biotin + 2 5'-deoxyadenosine + 2 L-methionine + 2 oxidized [2Fe-2S]-[ferredoxin]. The protein operates within cofactor biosynthesis; biotin biosynthesis; biotin from 7,8-diaminononanoate: step 2/2. Its function is as follows. Catalyzes the conversion of dethiobiotin (DTB) to biotin by the insertion of a sulfur atom into dethiobiotin via a radical-based mechanism. This chain is Biotin synthase, found in Cyanothece sp. (strain PCC 7425 / ATCC 29141).